The chain runs to 340 residues: Phosphoribosylformylglycinamidine cyclo-ligase (340 aa).

The protein belongs to the AIR synthase family.

It is found in the cytoplasm. The catalysed reaction is 2-formamido-N(1)-(5-O-phospho-beta-D-ribosyl)acetamidine + ATP = 5-amino-1-(5-phospho-beta-D-ribosyl)imidazole + ADP + phosphate + H(+). It participates in purine metabolism; IMP biosynthesis via de novo pathway; 5-amino-1-(5-phospho-D-ribosyl)imidazole from N(2)-formyl-N(1)-(5-phospho-D-ribosyl)glycinamide: step 2/2. The protein is Phosphoribosylformylglycinamidine cyclo-ligase of Acetivibrio thermocellus (strain ATCC 27405 / DSM 1237 / JCM 9322 / NBRC 103400 / NCIMB 10682 / NRRL B-4536 / VPI 7372) (Clostridium thermocellum).